The sequence spans 348 residues: Nitrogenase vanadium-iron protein beta chain (348 aa).

[8Fe-7S] cluster-binding residues include C31, C56, C115, and S153.

Belongs to the NifD/NifK/NifE/NifN family. Hexamer of two alpha, two beta, and two delta chains. [8Fe-7S] cluster is required as a cofactor.

It carries out the reaction N2 + 8 reduced [2Fe-2S]-[ferredoxin] + 16 ATP + 16 H2O = H2 + 8 oxidized [2Fe-2S]-[ferredoxin] + 2 NH4(+) + 16 ADP + 16 phosphate + 6 H(+). In terms of biological role, this vanadium-iron protein is part of the nitrogenase complex that catalyzes the key enzymatic reactions in nitrogen fixation. The protein is Nitrogenase vanadium-iron protein beta chain (vnfK) of Azorhizophilus paspali (Azotobacter paspali).